Reading from the N-terminus, the 1770-residue chain is Transposon Ty2-LR1 Gag-Pol polyprotein (1770 aa).

Polar residues-rich tracts occupy residues 1 to 11, 19 to 39, and 49 to 60; these read MESQQLHQNPH, ASVT…SASN, and KVNSQQETTPGT. Disordered stretches follow at residues 1 to 86 and 359 to 453; these read MESQ…GQYQ and QHSE…LPDH. An RNA-binding region spans residues 295–397; it reads ENNINVSDRL…SSKPRAAKAH (103 aa). Low complexity predominate over residues 369–381; it reads TSPNTTNTKVTTR. 2 stretches are compositionally biased toward polar residues: residues 399-408 and 415-435; these read IATSSKFSRV and ESTV…GQQQ. The active-site For protease activity; shared with dimeric partner is Asp457. Positions 579 to 636 are integrase-type zinc finger-like; that stretch reads NVNKSKSVNKYPYPLIHRMLGHANFRSIQKSLKKNAVTYLKESDIEWSNASTYQCPDC. The region spanning 656 to 831 is the Integrase catalytic domain; that stretch reads ESYEPFQYLH…AGLDITTILP (176 aa). The Mg(2+) site is built by Asp667 and Asp732. 4 disordered regions span residues 1005–1038, 1058–1135, 1146–1165, and 1170–1205; these read GGTI…MIDL, GTEE…KSSK, LPLP…VSKD, and HSRQ…TEIE. 2 stretches are compositionally biased toward polar residues: residues 1009 to 1024 and 1065 to 1082; these read ESDT…FTAR and QRNS…STPS. Over residues 1151-1165 the composition is skewed to basic and acidic residues; it reads LTHKSPTDTSDVSKD. The Bipartite nuclear localization signal motif lies at 1193 to 1227; that stretch reads KKRSLEDNETEIEVSRDTWNNKNMRSLEPPRSKKR. The region spanning 1353-1491 is the Reverse transcriptase Ty1/copia-type domain; sequence NDYYITQLDI…DILGLEIKYQ (139 aa). Mg(2+) is bound by residues Asp1361, Asp1442, Asp1443, Asp1625, Glu1667, and Asp1700. An RNase H Ty1/copia-type domain is found at 1625 to 1767; it reads DASYGNQPYY…IKTFKLLTNK (143 aa).

As to quaternary structure, the capsid protein forms a homotrimer, from which the VLPs are assembled. The protease is a homodimer, whose active site consists of two apposed aspartic acid residues. In terms of processing, initially, virus-like particles (VLPs) are composed of the structural unprocessed proteins Gag and Gag-Pol, and also contain the host initiator methionine tRNA (tRNA(i)-Met) which serves as a primer for minus-strand DNA synthesis, and a dimer of genomic Ty RNA. Processing of the polyproteins occurs within the particle and proceeds by an ordered pathway, called maturation. First, the protease (PR) is released by autocatalytic cleavage of the Gag-Pol polyprotein, and this cleavage is a prerequisite for subsequent processing at the remaining sites to release the mature structural and catalytic proteins. Maturation takes place prior to the RT reaction and is required to produce transposition-competent VLPs.

The protein resides in the cytoplasm. Its subcellular location is the nucleus. It carries out the reaction DNA(n) + a 2'-deoxyribonucleoside 5'-triphosphate = DNA(n+1) + diphosphate. It catalyses the reaction Endonucleolytic cleavage to 5'-phosphomonoester.. Capsid protein (CA) is the structural component of the virus-like particle (VLP), forming the shell that encapsulates the retrotransposons dimeric RNA genome. The particles are assembled from trimer-clustered units and there are holes in the capsid shells that allow for the diffusion of macromolecules. CA also has nucleocapsid-like chaperone activity, promoting primer tRNA(i)-Met annealing to the multipartite primer-binding site (PBS), dimerization of Ty2 RNA and initiation of reverse transcription. In terms of biological role, the aspartyl protease (PR) mediates the proteolytic cleavages of the Gag and Gag-Pol polyproteins after assembly of the VLP. Functionally, reverse transcriptase/ribonuclease H (RT) is a multifunctional enzyme that catalyzes the conversion of the retro-elements RNA genome into dsDNA within the VLP. The enzyme displays a DNA polymerase activity that can copy either DNA or RNA templates, and a ribonuclease H (RNase H) activity that cleaves the RNA strand of RNA-DNA heteroduplexes during plus-strand synthesis and hydrolyzes RNA primers. The conversion leads to a linear dsDNA copy of the retrotransposon that includes long terminal repeats (LTRs) at both ends. Its function is as follows. Integrase (IN) targets the VLP to the nucleus, where a subparticle preintegration complex (PIC) containing at least integrase and the newly synthesized dsDNA copy of the retrotransposon must transit the nuclear membrane. Once in the nucleus, integrase performs the integration of the dsDNA into the host genome. The protein is Transposon Ty2-LR1 Gag-Pol polyprotein (TY2B-LR1) of Saccharomyces cerevisiae (strain ATCC 204508 / S288c) (Baker's yeast).